The sequence spans 118 residues: Basic phospholipase A2 nigroxin A (118 aa).

Intrachain disulfides connect C11/C70, C25/C117, C27/C43, C42/C98, C49/C91, C59/C84, and C77/C89. Ca(2+) is bound by residues Y26, G28, and G30. Residue H46 is part of the active site. Position 47 (D47) interacts with Ca(2+). Residue D92 is part of the active site.

It belongs to the phospholipase A2 family. Group I subfamily. D49 sub-subfamily. Ca(2+) is required as a cofactor. Expressed by the venom gland.

It localises to the secreted. The catalysed reaction is a 1,2-diacyl-sn-glycero-3-phosphocholine + H2O = a 1-acyl-sn-glycero-3-phosphocholine + a fatty acid + H(+). In terms of biological role, snake venom phospholipase A2 (PLA2) that has only a weak enzymatic activity. It has a myotoxic activity in vivo (dystrophic effect). PLA2 catalyzes the calcium-dependent hydrolysis of the 2-acyl groups in 3-sn-phosphoglycerides. The chain is Basic phospholipase A2 nigroxin A from Micrurus nigrocinctus (Central American coral snake).